Here is a 420-residue protein sequence, read N- to C-terminus: UPF0053 protein HI_0107 (420 aa).

The 189-residue stretch at aspartate 2–proline 190 folds into the CNNM transmembrane domain. Helical transmembrane passes span serine 3–phenylalanine 23, phenylalanine 65–glycine 85, alanine 92–phenylalanine 112, and phenylalanine 126–methionine 146. CBS domains are found at residues methionine 208–phenylalanine 268 and leucine 273–serine 333.

Belongs to the UPF0053 family.

Its subcellular location is the cell membrane. In Haemophilus influenzae (strain ATCC 51907 / DSM 11121 / KW20 / Rd), this protein is UPF0053 protein HI_0107.